Here is a 361-residue protein sequence, read N- to C-terminus: MKPSLLHRLEGVSERFQELAGLLSEPEVISDNARFRRLSMEYSQLEPVVEAFRRYEGAQADLTAAREMQKDPDPDLRAMAEDEAATAAERLETLELELQKLLIPKDPHDHSNLFLEIRAGTGGDEAAIFAGDLFRMYSRYAENQGWQVEILSQSEGEHGGYKEVIARLIGAGAYSRLKFESGAHRVQRVPATESQGRIHTSAATVAVMPEPDEVEAPEINPADLRVDTYRASGAGGQHVNKTDSAIRLTHLPTGIVVECQDERSQHKNRARAMSLLAAKLFEAEQARQQAEQSATRKSLVGSGDRSERIRTYNFPQGRITDHRINLTLYKLDAVMAGDLDPVIEPLINEHQAEKLAALADE.

Gln237 carries the N5-methylglutamine modification.

It belongs to the prokaryotic/mitochondrial release factor family. Methylated by PrmC. Methylation increases the termination efficiency of RF1.

The protein resides in the cytoplasm. In terms of biological role, peptide chain release factor 1 directs the termination of translation in response to the peptide chain termination codons UAG and UAA. The polypeptide is Peptide chain release factor 1 (Thioalkalivibrio sulfidiphilus (strain HL-EbGR7)).